Here is a 132-residue protein sequence, read N- to C-terminus: Small ribosomal subunit protein uS12 (132 aa).

Aspartate 89 is modified (3-methylthioaspartic acid).

Belongs to the universal ribosomal protein uS12 family. Part of the 30S ribosomal subunit. Contacts proteins S8 and S17. May interact with IF1 in the 30S initiation complex.

In terms of biological role, with S4 and S5 plays an important role in translational accuracy. Its function is as follows. Interacts with and stabilizes bases of the 16S rRNA that are involved in tRNA selection in the A site and with the mRNA backbone. Located at the interface of the 30S and 50S subunits, it traverses the body of the 30S subunit contacting proteins on the other side and probably holding the rRNA structure together. The combined cluster of proteins S8, S12 and S17 appears to hold together the shoulder and platform of the 30S subunit. In Campylobacter curvus (strain 525.92), this protein is Small ribosomal subunit protein uS12.